The primary structure comprises 235 residues: Regulator of G-protein signaling 18 (235 aa).

Ser49 carries the post-translational modification Phosphoserine. Residues 86-202 (SFDKLLSHRD…LKSEIYLHLI (117 aa)) enclose the RGS domain. A phosphoserine mark is found at Ser216 and Ser218.

Its subcellular location is the cytoplasm. Functionally, inhibits signal transduction by increasing the GTPase activity of G protein alpha subunits thereby driving them into their inactive GDP-bound form. Binds to G(i) alpha-1, G(i) alpha-2, G(i) alpha-3 and G(q) alpha. This chain is Regulator of G-protein signaling 18 (Rgs18), found in Rattus norvegicus (Rat).